Here is a 185-residue protein sequence, read N- to C-terminus: MSTDLKQVNKSKKALQRNDNLSESKFVERLIKISRVSKVTKGGKKLSFRAIVVVGNENGQVGVGVGKADDVVNAFKKAKADGRKNLIKIPITKSLSIPHNVIGIFGACKIIMRPSIEGSGVIAGGSVRTVLEVAGIKNVIAKQLGSNNVLNNARAAVSGLNNLTTKSQVLKKRDLHSNSSEKINS.

The 64-residue stretch at F26–I89 folds into the S5 DRBM domain.

This sequence belongs to the universal ribosomal protein uS5 family. As to quaternary structure, part of the 30S ribosomal subunit. Contacts protein S4.

Its subcellular location is the plastid. It is found in the chloroplast. In terms of biological role, with S4 and S12 plays an important role in translational accuracy. This is Small ribosomal subunit protein uS5c (rps5) from Trieres chinensis (Marine centric diatom).